The chain runs to 485 residues: N-succinylglutamate 5-semialdehyde dehydrogenase (485 aa).

220–225 (GSANTG) contributes to the NAD(+) binding site. Residues E243 and C278 contribute to the active site.

It belongs to the aldehyde dehydrogenase family. AstD subfamily.

The enzyme catalyses N-succinyl-L-glutamate 5-semialdehyde + NAD(+) + H2O = N-succinyl-L-glutamate + NADH + 2 H(+). Its pathway is amino-acid degradation; L-arginine degradation via AST pathway; L-glutamate and succinate from L-arginine: step 4/5. Catalyzes the NAD-dependent reduction of succinylglutamate semialdehyde into succinylglutamate. The protein is N-succinylglutamate 5-semialdehyde dehydrogenase of Vibrio cholerae serotype O1 (strain M66-2).